Consider the following 86-residue polypeptide: Small ribosomal subunit protein bS20 (86 aa).

This sequence belongs to the bacterial ribosomal protein bS20 family.

Its function is as follows. Binds directly to 16S ribosomal RNA. The chain is Small ribosomal subunit protein bS20 from Rhodococcus erythropolis (strain PR4 / NBRC 100887).